The sequence spans 72 residues: Translation initiation factor IF-1 (72 aa).

The S1-like domain occupies 1-72 (MSKDDVIQMQ…SRARIVFRAK (72 aa)).

This sequence belongs to the IF-1 family. Component of the 30S ribosomal translation pre-initiation complex which assembles on the 30S ribosome in the order IF-2 and IF-3, IF-1 and N-formylmethionyl-tRNA(fMet); mRNA recruitment can occur at any time during PIC assembly.

The protein resides in the cytoplasm. One of the essential components for the initiation of protein synthesis. Stabilizes the binding of IF-2 and IF-3 on the 30S subunit to which N-formylmethionyl-tRNA(fMet) subsequently binds. Helps modulate mRNA selection, yielding the 30S pre-initiation complex (PIC). Upon addition of the 50S ribosomal subunit IF-1, IF-2 and IF-3 are released leaving the mature 70S translation initiation complex. The polypeptide is Translation initiation factor IF-1 (Albidiferax ferrireducens (strain ATCC BAA-621 / DSM 15236 / T118) (Rhodoferax ferrireducens)).